The chain runs to 1751 residues: Non-reducing polyketide synthase afvB (1751 aa).

The N-terminal acylcarrier protein transacylase domain (SAT) stretch occupies residues Phe19–His249. The Ketosynthase family 3 (KS3) domain occupies His381–Glu811. Catalysis depends on for beta-ketoacyl synthase activity residues Cys554, His689, and His730. The segment at Phe910 to Val1228 is malonyl-CoA:ACP transacylase (MAT) domain. Residues Thr1291–Asp1607 form a product template (PT) domain region. Residues His1295–Ser1429 form an N-terminal hotdog fold region. The PKS/mFAS DH domain maps to His1295 to Ser1603. The active-site Proton acceptor; for dehydratase activity is the His1327. Residues Leu1456 to Ser1603 form a C-terminal hotdog fold region. The active-site Proton donor; for dehydratase activity is the Asp1514. Residues Asp1610–Asn1670 form a disordered region. Polar residues predominate over residues Gln1612–Glu1657. Residues Asn1670–Gln1747 enclose the Carrier domain. Position 1707 is an O-(pantetheine 4'-phosphoryl)serine (Ser1707).

The cofactor is pantetheine 4'-phosphate. In terms of tissue distribution, expressed mainly in sclerotia, with expression levels 20-fold and 10-fold greater than the expression levels of this gene found in mycelium and conidia, respectively.

It participates in secondary metabolite biosynthesis. Functionally, non-reducing polyketide synthase (NRPKS); part of the gene cluster that mediates the biosynthesis of aflavarin, a bicoumarin that exhibits anti-insectan activity against the fungivorous beetle C.hemipterus. Catalyzes the formation of the aromatic polyketide from acetyl coenzyme A and seven malonyl coenzyme A molecules. The chain is Non-reducing polyketide synthase afvB from Aspergillus flavus (strain ATCC 200026 / FGSC A1120 / IAM 13836 / NRRL 3357 / JCM 12722 / SRRC 167).